We begin with the raw amino-acid sequence, 152 residues long: 6,7-dimethyl-8-ribityllumazine synthase (152 aa).

5-amino-6-(D-ribitylamino)uracil contacts are provided by residues Phe21, 55–57 (AFE), and 79–81 (AVI). Residue 84-85 (AT) coordinates (2S)-2-hydroxy-3-oxobutyl phosphate. The active-site Proton donor is the His87. Phe112 provides a ligand contact to 5-amino-6-(D-ribitylamino)uracil. Arg126 contacts (2S)-2-hydroxy-3-oxobutyl phosphate.

This sequence belongs to the DMRL synthase family. As to quaternary structure, forms an icosahedral capsid composed of 60 subunits, arranged as a dodecamer of pentamers.

It catalyses the reaction (2S)-2-hydroxy-3-oxobutyl phosphate + 5-amino-6-(D-ribitylamino)uracil = 6,7-dimethyl-8-(1-D-ribityl)lumazine + phosphate + 2 H2O + H(+). It participates in cofactor biosynthesis; riboflavin biosynthesis; riboflavin from 2-hydroxy-3-oxobutyl phosphate and 5-amino-6-(D-ribitylamino)uracil: step 1/2. Functionally, catalyzes the formation of 6,7-dimethyl-8-ribityllumazine by condensation of 5-amino-6-(D-ribitylamino)uracil with 3,4-dihydroxy-2-butanone 4-phosphate. This is the penultimate step in the biosynthesis of riboflavin. The chain is 6,7-dimethyl-8-ribityllumazine synthase from Exiguobacterium sibiricum (strain DSM 17290 / CCUG 55495 / CIP 109462 / JCM 13490 / 255-15).